A 186-amino-acid polypeptide reads, in one-letter code: Adenine phosphoribosyltransferase (186 aa).

This sequence belongs to the purine/pyrimidine phosphoribosyltransferase family. In terms of assembly, homodimer.

The protein resides in the cytoplasm. It catalyses the reaction AMP + diphosphate = 5-phospho-alpha-D-ribose 1-diphosphate + adenine. It functions in the pathway purine metabolism; AMP biosynthesis via salvage pathway; AMP from adenine: step 1/1. Catalyzes a salvage reaction resulting in the formation of AMP, that is energically less costly than de novo synthesis. This Xanthomonas campestris pv. campestris (strain 8004) protein is Adenine phosphoribosyltransferase.